Here is a 214-residue protein sequence, read N- to C-terminus: Guanylate kinase (214 aa).

Residues 6 to 192 (GTLYIISAPS…ALEDLKAIFR (187 aa)) form the Guanylate kinase-like domain. An ATP-binding site is contributed by 13–20 (APSGAGKT).

The protein belongs to the guanylate kinase family.

It localises to the cytoplasm. The catalysed reaction is GMP + ATP = GDP + ADP. In terms of biological role, essential for recycling GMP and indirectly, cGMP. The polypeptide is Guanylate kinase (Pseudomonas savastanoi pv. phaseolicola (strain 1448A / Race 6) (Pseudomonas syringae pv. phaseolicola (strain 1448A / Race 6))).